Reading from the N-terminus, the 121-residue chain is Small ribosomal subunit protein uS13 (121 aa).

A disordered region spans residues 91-121; that stretch reads HRMSLPVRGQRTRTNARTRRGSRKTVAGRKK. Over residues 100–121 the composition is skewed to basic residues; that stretch reads QRTRTNARTRRGSRKTVAGRKK.

This sequence belongs to the universal ribosomal protein uS13 family. In terms of assembly, part of the 30S ribosomal subunit. Forms a loose heterodimer with protein S19. Forms two bridges to the 50S subunit in the 70S ribosome.

Located at the top of the head of the 30S subunit, it contacts several helices of the 16S rRNA. In the 70S ribosome it contacts the 23S rRNA (bridge B1a) and protein L5 of the 50S subunit (bridge B1b), connecting the 2 subunits; these bridges are implicated in subunit movement. Contacts the tRNAs in the A and P-sites. This chain is Small ribosomal subunit protein uS13, found in Prochlorococcus marinus (strain MIT 9301).